A 457-amino-acid chain; its full sequence is DDB1- and CUL4-associated factor 10 (457 aa).

WD repeat units follow at residues 65 to 104 (RTHG…HIKT), 108 to 146 (AHED…SKAC), 150 to 189 (GHTS…EDGC), and 195 to 234 (FHTR…KSLE). The span at 246–265 (TASTSDMTSTSSETRPSSSP) shows a compositional bias: low complexity. Residues 246 to 304 (TASTSDMTSTSSETRPSSSPCHNSDSGPLFEKHMSRSSQREGTSPRNSLEVLTPEVPGE) form a disordered region. A compositionally biased stretch (polar residues) spans 281–292 (RSSQREGTSPRN). WD repeat units follow at residues 306–346 (DRGN…QEGT), 368–406 (VGRG…KELV), and 424–457 (SHKD…QPKF).

Belongs to the WD repeat DCAF10 family.

Its pathway is protein modification; protein ubiquitination. Its function is as follows. May function as a substrate receptor for CUL4-DDB1 E3 ubiquitin-protein ligase complex. The sequence is that of DDB1- and CUL4-associated factor 10 (dcaf10) from Xenopus laevis (African clawed frog).